The following is a 473-amino-acid chain: Putative protein TIC 214 C-terminal part (473 aa).

The protein belongs to the TIC214 family. As to quaternary structure, part of the Tic complex.

The protein localises to the plastid. It is found in the chloroplast. Its function is as follows. Involved in protein precursor import into chloroplasts. May be part of an intermediate translocation complex acting as a protein-conducting channel at the inner envelope. In Anthoceros angustus (Hornwort), this protein is Putative protein TIC 214 C-terminal part.